Consider the following 769-residue polypeptide: MSDDDKRHMELARLLVSLFPGRKLNGFLVGLLHSLSGRYRLPKELRGDRVPSSSKLARFIGTLDRERHIHSYFWDLLRRERPSRVGDIDRVARLWEEEGHWKGLESLRFPAGEVFPQVARGSSDNNGAPPLSFTLSHGDPKSDPEPSSPSRLVNTGLSEAERPESPLASDQCLVTSHAYFFWLEVGAWIEGSIEDEPVSLPEDLPSGARLRVVLFSSPGGLVLQPDADQGVLCIEGDGRVVVERPACVPPALQSRELADRRLFFPLRTPQAPGTYRLRCNIHHEGLLVQSRDVVLTVAEQPQRQSEALRSRVDYALSQTLSPTHLRQLGSATLSVLLNDDDWGTHGFRFVGGDDYRSSVHLDDAMLQEMISLARGAFRRASWGSKERYEALPSRPPYRYQGAQSEARLREDLVMMARIGRQLYDRVAEQLGQGADGADALRERMRLPGHIQLALKQGARHLVPISIFYDHRLDVALKDFTLCEAFIRASVASEPLEKSPCFQGDCPHREDRDVVCPSGFWGFRHTLALPFGMAAQGERGLMDLPGVLRIRDTPALLIAVSEDPDFVLRDNHLMRLQAMSGVAPIQVARSREKALELLRQQGSHLVYFYCHGGVDAETRAPFLQVGPLTDPYIFRDTLRVYDIRWRDPAPHPLVFINGCHTTELEPEQAIELVSGFVERAGAAGVIGTEVTIFEPLAVGFASRFMDAFLRRRLSLGASVREARLGILQHDFNPLGLVYLPFALSSLHLAGEASEGTSVAGGAGALVTPPA.

A disordered region spans residues 118–167 (VARGSSDNNGAPPLSFTLSHGDPKSDPEPSSPSRLVNTGLSEAERPESPL).

Probably a dedicated protease for substrate gasdermin bGSDM; cleaves the bGSDM precursor, releasing the pore-forming moiety, which integrates into the membrane and triggers cell death. Involved in defense against bacteriophages. Expression of gasdermin bGSDM and this neighboring protease is toxic in E.coli. The sequence is that of Probable protease Ga0334635_1659 from Vitiosangium sp. (strain GDMCC 1.1324).